The sequence spans 512 residues: SNF1-related protein kinase catalytic subunit alpha KIN10 (512 aa).

Positions 19–271 (YKLGRTLGIG…IPEIRQHPWF (253 aa)) constitute a Protein kinase domain. Residue K20 forms a Glycyl lysine isopeptide (Lys-Gly) (interchain with G-Cter in ubiquitin) linkage. Residue 25–33 (LGIGSFGRV) coordinates ATP. K34 participates in a covalent cross-link: Glycyl lysine isopeptide (Lys-Gly) (interchain with G-Cter in SUMO). K48 is an ATP binding site. K63 participates in a covalent cross-link: Glycyl lysine isopeptide (Lys-Gly) (interchain with G-Cter in SUMO). D142 serves as the catalytic Proton acceptor. Residue S164 is modified to Phosphoserine. Position 175 is a phosphothreonine; by GRIK1 or GRIK2 (T175). The interval 290–389 (AKKIDEEILQ…GLRSQYPVER (100 aa)) is auto-inhibitory domain (AID). The UBA domain occupies 292–332 (KIDEEILQEVINMGFDRNHLIESLRNRTQNDGTVTYYLILD). The regulatory domain (RD) stretch occupies residues 294 to 512 (DEEILQEVIN…AAFLAQLRVL (219 aa)). At S364 the chain carries Phosphoserine. Residue K390 forms a Glycyl lysine isopeptide (Lys-Gly) (interchain with G-Cter in SUMO) linkage. A PPI region spans residues 390–512 (KWALGLQSRA…AAFLAQLRVL (123 aa)). In terms of domain architecture, KA1 spans 463–511 (AVKSPNVVKFEIQLYKTRDDKYLLDLQRVQGPQFLFLDLCAAFLAQLRV).

The protein belongs to the protein kinase superfamily. CAMK Ser/Thr protein kinase family. SNF1 subfamily. Subunit of a probable heterotrimeric complex consisting of an alpha catalytic (KIN10 or KIN11) subunit, and a beta (KINB) and a gamma (KING or SNF4) non-catalytic regulatory subunits. Interacts with KINB2, KINB3, SNF4 and probably with KINB1 and KING1. Interacts with SKP1/ASK1, PAD1, the N-terminus of PRL1 and the WD40 domain of 5PTase13. Potential subunit of a SCF ubiquitin ligase complex consisting of a SNF1-related protein kinase, SKP1 and CUL1. The association of the SCF complex with the proteasome may be mediated by PAD1 and seems to be inhibited by the interaction with PRL1. Interacts with ATAF1. Interacts with ESD4. Interacts with SCE1. Interacts with FUS3. Interacts with PP2C74. Interacts with CDKE1. Interacts with ABI1 and PP2CA. Interacts with KRP6. Interacts with CIPK14. Interacts with FLZ proteins through their FLZ-type zinc finger domains. Interacts with GEBP/STKR1. Interacts with MYC2. Interacts with IDD8. Interacts with BZIP63. Interacts with PTL. Interacts with FLZ3, FLZ9, TCP3, TCP13, HB21/ZHD3 and HB23/ZHD10. Interacts with PTP1. Interacts with RAPTOR1B. Forms oligomers in vitro under strongly reducing conditions. Interacts with WRI1. Interacts with EIN3. Component of a ternary complex composed of BZIP2-BZIP63 heterodimer and KIN10. Interacts with IPK2b. Interacts with FLZ6 and FLZ10. Post-translationally, phosphorylated at Thr-175 in response to glucose. Phosphorylated at Thr-175 under submergence. Autophosphorylated. Dephosphorylated at Thr-175 by ABI1 and PP2CA. In terms of processing, ubiquitinated. Degradation is mediated by a CUL4-based E3 ligase that uses PRL1 as a substrate receptor. Sumoylated by SIZ1. Sumoylated SnRK1 is ubiquitinated and degraded by the proteasome. As to expression, isoform 2 is widely expressed, especially in newly developing tissues. Isoform 2 is expressed throughout the seedling, with highest expression in leaf primordia and vascular tissue, and the seedling root tip. Isoform 2 is later expressed in developing lateral root primordia and developing embryos within siliques. Isoform 1 is widely expressed but at very low levels.

The protein localises to the plastid. It is found in the chloroplast. It localises to the cytoplasm. The protein resides in the nucleus. Its subcellular location is the golgi apparatus. The protein localises to the endoplasmic reticulum. It carries out the reaction L-seryl-[protein] + ATP = O-phospho-L-seryl-[protein] + ADP + H(+). The enzyme catalyses L-threonyl-[protein] + ATP = O-phospho-L-threonyl-[protein] + ADP + H(+). Activated by phosphorylation at Thr-175 by GRIK1/SNAK2 and GRIK2/SNAK1. Inactivated by dephosphorylation at Thr-175. Inhibited by trehalose-6-phosphate. Down-regulated by SR45 by affecting its stability. Reduced kinase activity in response to H(2)O(2) treatment. The redox-state of Cys-177 seems to directly influence its kinase activity. Down-regulated by FLZ6 and FLZ10. Catalytic subunit of the probable trimeric SNF1-related protein kinase (SnRK) complex, a central regulator of cellular energy homeostasis, which, in response to seemingly unrelated darkness, sugar and stress conditions, activates energy-producing pathways and inhibits energy-consuming processes. May play a role in a signal transduction cascade regulating gene expression and carbohydrate metabolism in higher plants. The SnRK complex may also be involved in the regulation of fatty acid synthesis by phosphorylation of acetyl-CoA carboxylase and in assimilation of nitrogen by phosphorylating nitrate reductase. In vitro, KIN10 exhibits kinase activity on sucrose phosphate synthase and the kinase activity is inhibited by PRL1. May be a subunit of a SCF ubiquitin ligase complex and thus be involved in proteasomal ubiquitination. Phosphorylates GRIK1/SNAK2 and GRIK2/SNAK1 in vitro. Cooperates with FUS3 to regulate developmental phase transitions and lateral organ development and act both as positive regulators of abscisic acid (ABA) signaling during germination. Phosphorylates FUS3 in embryo. Negatively modulates MYC2 accumulation through its protein phosphorylation. Phosphorylates geminivirus (CaLCuV, TGMV, ToMoV) AL2 protein resulting in a delay in the viral DNA accumulation and symptom appearance during infection. Regulates bZIP63 activity to alter metabolism in response to starvation through its protein phosphorylation. Under sugar deprivation conditions, antagonizes the IDD8 function in flowering time control by its protein phosphorylation. Plays a cardinal role in the control of cell proliferation through inhibition of KRP6 activity by its protein phosphorylation. Under submergence, phosphorylates PTP1, leading to the release of the MPK6 signaling pathway inhibition. Triggers its own SUMO-mediated proteasomal degradation, establishing a negative feedback loop that attenuates SnRK1 signaling and prevents detrimental hyperactivation of stress responses. Phosphorylates RAPTOR1B in vitro. Phosphorylates and down-regulates HMGR1S in vitro. Kinase activity is redox-sensitive. Acts upstream of TOR in the regulation of autophagy. Required for the activation of autophagy by many abiotic stresses. Involved in positive regulation of autophagy, possibly by affecting the phosphorylation of ATG1 proteins. Negatively modulates WRI1 accumulation through its protein phosphorylation. Modulates leaf senescence progression by the negative regulation of EIN3 accumulation through its protein phosphorylation. Under extended darkness, C/S1-bZIP-SnRK1 complex interacts with the histone acetylation machinery to remodel chromatin and facilitate transcription. BZIP2-BZIP63-KIN10 complex binds to the ETFQO promoter to up-regulate its transcription. Phosphorylates and down-regulates IPK2b in vitro. Involved in the regulation of sucrose-induced hypocotyl elongation under light/dark cycles. This chain is SNF1-related protein kinase catalytic subunit alpha KIN10, found in Arabidopsis thaliana (Mouse-ear cress).